We begin with the raw amino-acid sequence, 171 residues long: Crossover junction endodeoxyribonuclease RuvC (171 aa).

Catalysis depends on residues Asp7, Glu66, and Asp138. Residues Asp7, Glu66, and Asp138 each contribute to the Mg(2+) site.

Belongs to the RuvC family. As to quaternary structure, homodimer which binds Holliday junction (HJ) DNA. The HJ becomes 2-fold symmetrical on binding to RuvC with unstacked arms; it has a different conformation from HJ DNA in complex with RuvA. In the full resolvosome a probable DNA-RuvA(4)-RuvB(12)-RuvC(2) complex forms which resolves the HJ. Requires Mg(2+) as cofactor.

The protein resides in the cytoplasm. The enzyme catalyses Endonucleolytic cleavage at a junction such as a reciprocal single-stranded crossover between two homologous DNA duplexes (Holliday junction).. Its function is as follows. The RuvA-RuvB-RuvC complex processes Holliday junction (HJ) DNA during genetic recombination and DNA repair. Endonuclease that resolves HJ intermediates. Cleaves cruciform DNA by making single-stranded nicks across the HJ at symmetrical positions within the homologous arms, yielding a 5'-phosphate and a 3'-hydroxyl group; requires a central core of homology in the junction. The consensus cleavage sequence is 5'-(A/T)TT(C/G)-3'. Cleavage occurs on the 3'-side of the TT dinucleotide at the point of strand exchange. HJ branch migration catalyzed by RuvA-RuvB allows RuvC to scan DNA until it finds its consensus sequence, where it cleaves and resolves the cruciform DNA. This is Crossover junction endodeoxyribonuclease RuvC from Francisella tularensis subsp. holarctica (strain FTNF002-00 / FTA).